The sequence spans 473 residues: Protein translocase subunit SecD (473 aa).

Helical transmembrane passes span 5 to 25 (VLVK…LLYP), 316 to 336 (ASLY…KSGG), 337 to 357 (IISN…MAAF), 364 to 384 (PGIA…VLIL), 409 to 429 (WSAI…LFQF), and 436 to 456 (GFAV…VFVT).

Belongs to the SecD/SecF family. SecD subfamily. Forms a complex with SecF. Part of the essential Sec protein translocation apparatus which comprises SecA, SecYEG and auxiliary proteins SecDF. Other proteins may also be involved.

The protein localises to the cell inner membrane. Its function is as follows. Part of the Sec protein translocase complex. Interacts with the SecYEG preprotein conducting channel. SecDF uses the proton motive force (PMF) to complete protein translocation after the ATP-dependent function of SecA. The sequence is that of Protein translocase subunit SecD from Elusimicrobium minutum (strain Pei191).